A 435-amino-acid polypeptide reads, in one-letter code: Cysteine--tRNA ligase (435 aa).

Residue cysteine 24 coordinates Zn(2+). The 'HIGH' region signature appears at 26 to 36; the sequence is PTVYDHIHIGN. Zn(2+)-binding residues include cysteine 202, histidine 228, and glutamate 232. The 'KMSKS' region signature appears at 260-264; it reads KMSKS. Lysine 263 serves as a coordination point for ATP.

The protein belongs to the class-I aminoacyl-tRNA synthetase family. As to quaternary structure, monomer. It depends on Zn(2+) as a cofactor.

It localises to the cytoplasm. The enzyme catalyses tRNA(Cys) + L-cysteine + ATP = L-cysteinyl-tRNA(Cys) + AMP + diphosphate. This chain is Cysteine--tRNA ligase, found in Mycoplasmoides gallisepticum (strain R(low / passage 15 / clone 2)) (Mycoplasma gallisepticum).